The following is a 233-amino-acid chain: Phosphonates import ATP-binding protein PhnC 1 (233 aa).

Residues 2–227 (LSVSGLTKRY…PAAALDREDI (226 aa)) form the ABC transporter domain. 34–41 (GRSGAGKT) provides a ligand contact to ATP.

It belongs to the ABC transporter superfamily. Phosphonates importer (TC 3.A.1.9.1) family. The complex is composed of two ATP-binding proteins (PhnC), two transmembrane proteins (PhnE) and a solute-binding protein (PhnD).

The protein resides in the cell membrane. It catalyses the reaction phosphonate(out) + ATP + H2O = phosphonate(in) + ADP + phosphate + H(+). Its function is as follows. Part of the ABC transporter complex PhnCDE involved in phosphonates import. Responsible for energy coupling to the transport system. In Natronomonas pharaonis (strain ATCC 35678 / DSM 2160 / CIP 103997 / JCM 8858 / NBRC 14720 / NCIMB 2260 / Gabara) (Halobacterium pharaonis), this protein is Phosphonates import ATP-binding protein PhnC 1.